The following is a 281-amino-acid chain: 3-mercaptopyruvate sulfurtransferase (281 aa).

Rhodanese domains are found at residues 17–135 (DDPE…LLEE) and 165–278 (HENT…LPVE). Substrate is bound at residue R179. The active-site Cysteine persulfide intermediate is C238. Residues 238–244 (CGSGVTA) are substrate specificity.

In terms of assembly, monomer.

It is found in the cytoplasm. It carries out the reaction 2-oxo-3-sulfanylpropanoate + [thioredoxin]-dithiol = [thioredoxin]-disulfide + hydrogen sulfide + pyruvate + H(+). Its function is as follows. Catalyzes the transfer of sulfur from 3-mercaptopyruvate to a thiol-containing acceptor to form an intramolecular disulfide releasing hydrogen sulfide and pyruvate. May be involved in the enhancement of bacterial growth inhibition by serine. In Escherichia coli (strain K12), this protein is 3-mercaptopyruvate sulfurtransferase (sseA).